Here is a 110-residue protein sequence, read N- to C-terminus: Phosphoribosyl-AMP cyclohydrolase (110 aa).

D74 provides a ligand contact to Mg(2+). C75 lines the Zn(2+) pocket. Mg(2+) contacts are provided by D76 and D78. Zn(2+) contacts are provided by C91 and C98.

It belongs to the PRA-CH family. Homodimer. Mg(2+) serves as cofactor. Zn(2+) is required as a cofactor.

Its subcellular location is the cytoplasm. The enzyme catalyses 1-(5-phospho-beta-D-ribosyl)-5'-AMP + H2O = 1-(5-phospho-beta-D-ribosyl)-5-[(5-phospho-beta-D-ribosylamino)methylideneamino]imidazole-4-carboxamide. It participates in amino-acid biosynthesis; L-histidine biosynthesis; L-histidine from 5-phospho-alpha-D-ribose 1-diphosphate: step 3/9. Its function is as follows. Catalyzes the hydrolysis of the adenine ring of phosphoribosyl-AMP. In Lacticaseibacillus casei (strain BL23) (Lactobacillus casei), this protein is Phosphoribosyl-AMP cyclohydrolase.